The following is a 403-amino-acid chain: Exodeoxyribonuclease 7 large subunit (403 aa).

It belongs to the XseA family. Heterooligomer composed of large and small subunits.

The protein resides in the cytoplasm. The enzyme catalyses Exonucleolytic cleavage in either 5'- to 3'- or 3'- to 5'-direction to yield nucleoside 5'-phosphates.. Its function is as follows. Bidirectionally degrades single-stranded DNA into large acid-insoluble oligonucleotides, which are then degraded further into small acid-soluble oligonucleotides. The protein is Exodeoxyribonuclease 7 large subunit of Streptomyces griseus subsp. griseus (strain JCM 4626 / CBS 651.72 / NBRC 13350 / KCC S-0626 / ISP 5235).